Reading from the N-terminus, the 464-residue chain is tRNA modification GTPase MnmE (464 aa).

Positions 27, 89, and 128 each coordinate (6S)-5-formyl-5,6,7,8-tetrahydrofolate. A TrmE-type G domain is found at 225–384; the sequence is GLATAIVGRP…LEETIAHLFF (160 aa). N235 serves as a coordination point for K(+). GTP is bound by residues 235-240, 254-260, and 279-282; these read NVGKSS, TDVAGTT, and DTAG. S239 serves as a coordination point for Mg(2+). Residues T254, V256, and T259 each contribute to the K(+) site. T260 is a Mg(2+) binding site. Position 464 (K464) interacts with (6S)-5-formyl-5,6,7,8-tetrahydrofolate.

The protein belongs to the TRAFAC class TrmE-Era-EngA-EngB-Septin-like GTPase superfamily. TrmE GTPase family. As to quaternary structure, homodimer. Heterotetramer of two MnmE and two MnmG subunits. Requires K(+) as cofactor.

It is found in the cytoplasm. In terms of biological role, exhibits a very high intrinsic GTPase hydrolysis rate. Involved in the addition of a carboxymethylaminomethyl (cmnm) group at the wobble position (U34) of certain tRNAs, forming tRNA-cmnm(5)s(2)U34. The sequence is that of tRNA modification GTPase MnmE from Levilactobacillus brevis (strain ATCC 367 / BCRC 12310 / CIP 105137 / JCM 1170 / LMG 11437 / NCIMB 947 / NCTC 947) (Lactobacillus brevis).